The chain runs to 384 residues: 5-amino-6-(D-ribitylamino)uracil--L-tyrosine 4-hydroxyphenyl transferase 2 (384 aa).

One can recognise a Radical SAM core domain in the interval 53–286; that stretch reads VSYVVNRNIY…IAISRIILHT (234 aa). The [4Fe-4S] cluster site is built by C67, C71, and C74.

It belongs to the radical SAM superfamily. CofH family. In terms of assembly, consists of two subunits, CofG and CofH. [4Fe-4S] cluster is required as a cofactor.

It carries out the reaction 5-amino-6-(D-ribitylamino)uracil + L-tyrosine + S-adenosyl-L-methionine = 5-amino-5-(4-hydroxybenzyl)-6-(D-ribitylimino)-5,6-dihydrouracil + 2-iminoacetate + 5'-deoxyadenosine + L-methionine + H(+). The protein operates within cofactor biosynthesis; coenzyme F0 biosynthesis. Its function is as follows. Catalyzes the radical-mediated synthesis of 5-amino-5-(4-hydroxybenzyl)-6-(D-ribitylimino)-5,6-dihydrouracil from 5-amino-6-(D-ribitylamino)uracil and L-tyrosine. This Methanosarcina acetivorans (strain ATCC 35395 / DSM 2834 / JCM 12185 / C2A) protein is 5-amino-6-(D-ribitylamino)uracil--L-tyrosine 4-hydroxyphenyl transferase 2.